The following is a 127-amino-acid chain: Small ribosomal subunit protein bS6 (127 aa).

A disordered region spans residues 99–127 (PLPAPRVVPGSEPAAAPQEQPAANSEAAS). The segment covering 109 to 127 (SEPAAAPQEQPAANSEAAS) has biased composition (low complexity).

Belongs to the bacterial ribosomal protein bS6 family.

Binds together with bS18 to 16S ribosomal RNA. The chain is Small ribosomal subunit protein bS6 from Parasynechococcus marenigrum (strain WH8102).